Reading from the N-terminus, the 152-residue chain is Small ribosomal subunit protein uS8m (152 aa).

It belongs to the universal ribosomal protein uS8 family.

It is found in the mitochondrion. This chain is Small ribosomal subunit protein uS8m (mrps8), found in Dictyostelium discoideum (Social amoeba).